Reading from the N-terminus, the 286-residue chain is UDP-3-O-acyl-N-acetylglucosamine deacetylase (286 aa).

The Zn(2+) site is built by His-79, His-237, and Asp-241. Catalysis depends on His-264, which acts as the Proton donor.

Belongs to the LpxC family. The cofactor is Zn(2+).

It carries out the reaction a UDP-3-O-[(3R)-3-hydroxyacyl]-N-acetyl-alpha-D-glucosamine + H2O = a UDP-3-O-[(3R)-3-hydroxyacyl]-alpha-D-glucosamine + acetate. It functions in the pathway glycolipid biosynthesis; lipid IV(A) biosynthesis; lipid IV(A) from (3R)-3-hydroxytetradecanoyl-[acyl-carrier-protein] and UDP-N-acetyl-alpha-D-glucosamine: step 2/6. Functionally, catalyzes the hydrolysis of UDP-3-O-myristoyl-N-acetylglucosamine to form UDP-3-O-myristoylglucosamine and acetate, the committed step in lipid A biosynthesis. This chain is UDP-3-O-acyl-N-acetylglucosamine deacetylase, found in Brucella melitensis biotype 2 (strain ATCC 23457).